Reading from the N-terminus, the 452-residue chain is Histone acetyltransferase type B subunit 2 (452 aa).

6 WD repeats span residues 155–195, 205–245, 256–296, 300–340, 344–384, and 401–441; these read YEDG…NSKE, HHTK…SDGS, HHDA…NKAA, KESR…TPIS, SHCD…DDLS, and GHSS…SNDE.

Belongs to the WD repeat RBAP46/RBAP48/MSI1 family. In terms of assembly, component of the HAT-B complex composed of at least HAT1 and HAT2. The HAT-B complex binds to histone H4 tail.

Its subcellular location is the cytoplasm. It is found in the nucleus. Functionally, regulatory subunit of the histone acetylase B (HAT-B) complex. The complex acetylates 'Lys-12' of histone H4 which is required for telomeric silencing. The chain is Histone acetyltransferase type B subunit 2 (HAT2) from Yarrowia lipolytica (strain CLIB 122 / E 150) (Yeast).